The following is an 85-amino-acid chain: Large ribosomal subunit protein bL27 (85 aa).

Residues 1-22 form a disordered region; it reads MAHKKAGGSTRNGRDSESKRLG.

Belongs to the bacterial ribosomal protein bL27 family.

This chain is Large ribosomal subunit protein bL27, found in Aliivibrio fischeri (strain ATCC 700601 / ES114) (Vibrio fischeri).